Consider the following 1178-residue polypeptide: MDNNPNINECIPYNCLSNPEVEVLGGERIETGYTPIDISLSLTQFLLSEFVPGAGFVLGLVDIIWGIFGPSQWDAFLVQIEQLINQRIEEFARNQAISRLEGLSNLYQIYAESFREWEADPTNPALREEMRIQFNDMNSALTTAIPLFAVQNYQVPLLSVYVQAANLHLSVLRDVSVFGQRWGFDAATINSRYNDLTRLIGNYTDYAVRWYNTGLERVWGPDSRDWVRYNQFRRELTLTVLDIVALFPNYDSRRYPIRTVSQLTREIYTNPVLENFDGSFRGSAQGIERSIRSPHLMDILNSITIYTDAHRGYYYWSGHQIMASPVGFSGPEFTFPLYGTMGNAAPQQRIVAQLGQGVYRTLSSTLYRRPFNIGINNQQLSVLDGTEFAYGTSSNLPSAVYRKSGTVDSLDEIPPQNNNVPPRQGFSHRLSHVSMFRSGFSNSSVSIIRAPMFSWIHRSAEFNNIIASDSITQIPAVKGNFLFNGSVISGPGFTGGDLVRLNSSGNNIQNRGYIEVPIHFPSTSTRYRVRVRYASVTPIHLNVNWGNSSIFSNTVPATATSLDNLQSSDFGYFESANAFTSSLGNIVGVRNFSGTAGVIIDRFEFIPVTATLEAEYNLERAQKAVNALFTSTNQLGLKTNVTDYHIDQVSNLVTYLSDEFCLDEKRELSEKVKHAKRLSDERNLLQDSNFKDINRQPERGWGGSTGITIQGGDDVFKENYVTLSGTFDECYPTYLYQKIDESKLKAFTRYQLRGYIEDSQDLEIYLIRYNAKHETVNVPGTGSLWPLSAQSPIGKCGEPNRCAPHLEWNPDLDCSCRDGEKCAHHSHHFSLDIDVGCTDLNEDLGVWVIFKIKTQDGHARLGNLEFLEEKPLVGEALARVKRAEKKWRDKREKLEWETNIVYKEAKESVDALFVNSQYDQLQADTNIAMIHAADKRVHSIREAYLPELSVIPGVNAAIFEELEGRIFTAFSLYDARNVIKNGDFNNGLSCWNVKGHVDVEEQNNQRSVLVVPEWEAEVSQEVRVCPGRGYILRVTAYKEGYGEGCVTIHEIENNTDELKFSNCVEEEIYPNNTVTCNDYTVNQEEYGGAYTSRNRGYNEAPSVPADYASVYEEKSYTDGRRENPCEFNRGYRDYTPLPVGYVTKELEYFPETDKVWIEIGETEGTFIVDSVELLLMEE.

Belongs to the delta endotoxin family.

In terms of biological role, promotes colloidosmotic lysis by binding to the midgut epithelial cells of many lepidopteran larvae. The chain is Pesticidal crystal protein Cry1Ac (cry1Ac) from Bacillus thuringiensis subsp. kurstaki.